The chain runs to 90 residues: Mitochondrial import inner membrane translocase subunit Tim10 (90 aa).

A Twin CX3C motif motif is present at residues 29-54 (CHRKCVPPHYKEAELSKGESVCLDRC). 2 disulfides stabilise this stretch: Cys-29/Cys-54 and Cys-33/Cys-50.

The protein belongs to the small Tim family. In terms of assembly, heterohexamer; composed of 3 copies of TIMM9 and 3 copies of TIMM10/TIM10A, named soluble 70 kDa complex. The complex forms a 6-bladed alpha-propeller structure and associates with the TIMM22 component of the TIM22 complex. Interacts with multi-pass transmembrane proteins in transit. Also forms a complex composed of TIMM9, TIMM10/TIM10A and FXC1/TIM10B.

The protein localises to the mitochondrion inner membrane. In terms of biological role, mitochondrial intermembrane chaperone that participates in the import and insertion of multi-pass transmembrane proteins into the mitochondrial inner membrane. May also be required for the transfer of beta-barrel precursors from the TOM complex to the sorting and assembly machinery (SAM complex) of the outer membrane. Acts as a chaperone-like protein that protects the hydrophobic precursors from aggregation and guide them through the mitochondrial intermembrane space. This is Mitochondrial import inner membrane translocase subunit Tim10 (TIMM10) from Bos taurus (Bovine).